The chain runs to 165 residues: UBA-like domain-containing protein 2-B (165 aa).

The tract at residues 119 to 165 (QQPVWLPPASPTAHLHHHHHHPQPVWPPNSQPTGGPQKAMAAMDGQR) is disordered.

It belongs to the UBALD family.

In Xenopus laevis (African clawed frog), this protein is UBA-like domain-containing protein 2-B (ubald2-b).